A 177-amino-acid polypeptide reads, in one-letter code: ATP-dependent protease subunit HslV (177 aa).

Residue Thr-6 is part of the active site. Residues Ser-162, Cys-165, and Thr-168 each contribute to the Na(+) site.

Belongs to the peptidase T1B family. HslV subfamily. In terms of assembly, a double ring-shaped homohexamer of HslV is capped on each side by a ring-shaped HslU homohexamer. The assembly of the HslU/HslV complex is dependent on binding of ATP.

The protein localises to the cytoplasm. The catalysed reaction is ATP-dependent cleavage of peptide bonds with broad specificity.. With respect to regulation, allosterically activated by HslU binding. In terms of biological role, protease subunit of a proteasome-like degradation complex believed to be a general protein degrading machinery. The chain is ATP-dependent protease subunit HslV from Desulforudis audaxviator (strain MP104C).